Reading from the N-terminus, the 570-residue chain is Formate--tetrahydrofolate ligase (570 aa).

65–72 (TPYGEGKT) contributes to the ATP binding site.

Belongs to the formate--tetrahydrofolate ligase family.

It catalyses the reaction (6S)-5,6,7,8-tetrahydrofolate + formate + ATP = (6R)-10-formyltetrahydrofolate + ADP + phosphate. It functions in the pathway one-carbon metabolism; tetrahydrofolate interconversion. This chain is Formate--tetrahydrofolate ligase, found in Shewanella piezotolerans (strain WP3 / JCM 13877).